The sequence spans 936 residues: Isoleucine--tRNA ligase (936 aa).

The short motif at 58-68 is the 'HIGH' region element; the sequence is PYANGRAHLGT. Residue E561 participates in L-isoleucyl-5'-AMP binding. A 'KMSKS' region motif is present at residues 602-606; the sequence is KMSKS. K605 contacts ATP. Residues C899, C902, C919, and C922 each coordinate Zn(2+).

This sequence belongs to the class-I aminoacyl-tRNA synthetase family. IleS type 1 subfamily. In terms of assembly, monomer. Zn(2+) serves as cofactor.

The protein resides in the cytoplasm. It carries out the reaction tRNA(Ile) + L-isoleucine + ATP = L-isoleucyl-tRNA(Ile) + AMP + diphosphate. Its function is as follows. Catalyzes the attachment of isoleucine to tRNA(Ile). As IleRS can inadvertently accommodate and process structurally similar amino acids such as valine, to avoid such errors it has two additional distinct tRNA(Ile)-dependent editing activities. One activity is designated as 'pretransfer' editing and involves the hydrolysis of activated Val-AMP. The other activity is designated 'posttransfer' editing and involves deacylation of mischarged Val-tRNA(Ile). The chain is Isoleucine--tRNA ligase from Coxiella burnetii (strain Dugway 5J108-111).